The primary structure comprises 394 residues: ORC1-type DNA replication protein 3 (394 aa).

ATP-binding positions include Thr-66–Phe-70 and Tyr-207.

It belongs to the CDC6/cdc18 family. As to quaternary structure, monomer. Interacts with Cdc6-1, Cdc6-2, MCM and PolB1.

Its function is as follows. Involved in regulation of DNA replication. May play essential roles in origin recognition and cell cycle control of replication. Binds to DNA, with a preference for molecules that contain a bubble, a fork, or a tail. Inhibits the binding of the MCM helicase to the origin DNA and inhibits its DNA helicase activity. Also regulates the DNA polymerase and the nuclease activities of PolB1. Inhibits the DNA-binding activity of Cdc6-1 and Cdc6-2. This chain is ORC1-type DNA replication protein 3 (cdc6-3), found in Saccharolobus solfataricus (strain ATCC 35092 / DSM 1617 / JCM 11322 / P2) (Sulfolobus solfataricus).